The following is a 273-amino-acid chain: Neuferricin (273 aa).

The first 22 residues, 1-22, serve as a signal peptide directing secretion; that stretch reads MLGYLAAAALCLAAVLLMRLDH. The Cytochrome b5 heme-binding domain maps to 44 to 143; the sequence is GRLMSKEELS…QNYITIGKLT (100 aa).

This sequence belongs to the cytochrome b5 family. MAPR subfamily.

The protein resides in the secreted. Its function is as follows. Heme-binding protein which promotes neuronal but not astrocyte differentiation. In Xenopus tropicalis (Western clawed frog), this protein is Neuferricin (cyb5d2).